The chain runs to 3166 residues: Intermembrane lipid transfer protein VPS13A (3166 aa).

The Chorein N-terminal domain maps to 3–116 (FESVVVEVLN…LMETKQQELK (114 aa)). 2 TPR repeats span residues 212 to 245 (LFAYWNVNSEMFYLNDYDESLKALKNGIVNENIV) and 373 to 406 (LTSKKPSPEILMSLEELEKTLDVFNITIARQQAE). Thr831 carries the post-translational modification Phosphothreonine. At Ser835 the chain carries Phosphoserine. The FFAT signature appears at 838–844 (EFFDAPC). Residues 1343–1359 (APSSANKDPETMTSGVT) show a composition bias toward polar residues. Positions 1343-1365 (APSSANKDPETMTSGVTSPPDHS) are disordered. Ser1410 carries the post-translational modification Phosphoserine. TPR repeat units lie at residues 1806-1840 (AIVESDSEAENYKVPEYKTAISFYSRDQLNITLSK) and 1999-2034 (ISVFEGDTLLGIASPENEFNIPLASYRSSLSLVPED). In terms of domain architecture, SHR-BD spans 2202-2447 (VAFHSPYWMV…VYYTWADPVG (246 aa)). 2 required for mitochondrial localization regions span residues 2607-3166 (LQPH…SPRL) and 2743-3166 (EYEV…SPRL). 2 TPR repeats span residues 2716–2750 (ADLVTKAEVTEKTEVEHFHKDVEAFEQEYEVVSSV) and 2852–2890 (ILGLDVLGNPFGLIREFSEGVEAFFYEPYQGAIQGPEEF). The segment at 2945 to 3019 (PAGLREGITR…SSTFQGIKRA (75 aa)) is required for lipid droplet localization.

Belongs to the VPS13 family. As to quaternary structure, interacts (via FFAT motif) with VAPA and VAPB. Interacts with RAB7A. Interacts with XK.

It is found in the mitochondrion outer membrane. It localises to the endoplasmic reticulum membrane. Its subcellular location is the endosome membrane. The protein localises to the lysosome membrane. The protein resides in the lipid droplet. It is found in the golgi apparatus. It localises to the cytoplasmic vesicle. Its subcellular location is the secretory vesicle. The protein localises to the neuronal dense core vesicle. Its function is as follows. Mediates the transfer of lipids between membranes at organelle contact sites. Required for the formation or stabilization of ER-mitochondria contact sites which enable transfer of lipids between the ER and mitochondria. Negatively regulates lipid droplet size and motility. Required for efficient lysosomal protein degradation. In Mus musculus (Mouse), this protein is Intermembrane lipid transfer protein VPS13A.